Reading from the N-terminus, the 702-residue chain is MA3 DOMAIN-CONTAINING TRANSLATION REGULATORY FACTOR 3 (702 aa).

A disordered region spans residues 1–100 (MEGFLTDQQR…PNDPNYDSGE (100 aa)). Over residues 53–65 (VKHRRSHAGRSIR) the composition is skewed to basic residues. Basic and acidic residues predominate over residues 81-91 (IDTDGDYHIDP). Positions 116–237 (DYKKAAASII…PPAFLPRAAK (122 aa)) constitute an MI 1 domain. The Nuclear localization signal 1 motif lies at 267–274 (ERRWGGQT). MI domains follow at residues 280–401 (EVKK…PSGE), 414–535 (RFKE…EISS), and 577–697 (DAKD…SLTE). The Nuclear localization signal 2 signature appears at 615-622 (VKKALVMG).

Belongs to the PDCD4 family. Interacts with EIN2, ETR2 and EIN4. Binds to EIF4A1. The association with ribosomes is modulated by cellular energy status and TOR activity. As to expression, mostly expressed in vegetative tissues, such as leaves and stems, and, to a lower extent, in roots and reproductive tissues, such as flower buds and flowers. Expressed in seedlings, roots, cauline leaf tips and flowers.

It localises to the nucleus. It is found in the cytoplasm. Its subcellular location is the cytosol. Its function is as follows. Involved in target of rapamycin (TOR)-regulated translation control, especially under energy-deficient conditions. Involved in the regulation of the ethylene-mediated signaling pathway. Involved in salt stress responses. Reduced cotyledons size and early flowering. This Arabidopsis thaliana (Mouse-ear cress) protein is MA3 DOMAIN-CONTAINING TRANSLATION REGULATORY FACTOR 3.